The primary structure comprises 151 residues: Mating pheromone 3 (151 aa).

An N-terminal signal peptide occupies residues 1–16 (MKAIFIILAILMVTQA). The propeptide occupies 17 to 52 (FKMTSKVNTKLQSQIQSKFQSKNKLASTFQTSSQLK).

The protein localises to the secreted. Functionally, mating ciliate pheromones (or gamones) are diffusible extracellular communication signals that distinguish different intraspecific classes of cells commonly referred to as 'mating types'. They prepare the latter for conjugation by changing their cell surface properties. The polypeptide is Mating pheromone 3 (PHR3) (Euplotoides octocarinatus (Freshwater ciliate)).